Consider the following 82-residue polypeptide: MQNEEGQMVDLYVPRKCSATNRIITAKDHASVQINIGHVDENGLYDGRFTTFALSGFIRAQGDADSALDRLWQKRKAEVKQQ.

The protein belongs to the eukaryotic ribosomal protein eS21 family.

The polypeptide is Small ribosomal subunit protein eS21 (RPS21) (Oryza sativa subsp. japonica (Rice)).